A 131-amino-acid chain; its full sequence is Universal stress protein C (131 aa).

Belongs to the universal stress protein A family.

Its subcellular location is the cytoplasm. In terms of biological role, required for resistance to DNA-damaging agents. The polypeptide is Universal stress protein C (uspC) (Salmonella typhi).